Consider the following 656-residue polypeptide: DNA mismatch repair protein MutL (656 aa).

The interval 385-427 is disordered; that stretch reads DNSDSLTEQNSTDYTVNQPETGSVSEKITDRTVESSNEFTDRT. Over residues 387–410 the composition is skewed to polar residues; it reads SDSLTEQNSTDYTVNQPETGSVSE. The span at 411–427 shows a compositional bias: basic and acidic residues; sequence KITDRTVESSNEFTDRT.

This sequence belongs to the DNA mismatch repair MutL/HexB family.

Its function is as follows. This protein is involved in the repair of mismatches in DNA. It is required for dam-dependent methyl-directed DNA mismatch repair. May act as a 'molecular matchmaker', a protein that promotes the formation of a stable complex between two or more DNA-binding proteins in an ATP-dependent manner without itself being part of a final effector complex. In Lactococcus lactis subsp. cremoris (strain SK11), this protein is DNA mismatch repair protein MutL.